Here is a 176-residue protein sequence, read N- to C-terminus: ATP-dependent protease subunit HslV (176 aa).

Threonine 5 is an active-site residue. Na(+) contacts are provided by glycine 161, cysteine 164, and threonine 167.

The protein belongs to the peptidase T1B family. HslV subfamily. A double ring-shaped homohexamer of HslV is capped on each side by a ring-shaped HslU homohexamer. The assembly of the HslU/HslV complex is dependent on binding of ATP.

It is found in the cytoplasm. It carries out the reaction ATP-dependent cleavage of peptide bonds with broad specificity.. Its activity is regulated as follows. Allosterically activated by HslU binding. In terms of biological role, protease subunit of a proteasome-like degradation complex believed to be a general protein degrading machinery. This Sulfurovum sp. (strain NBC37-1) protein is ATP-dependent protease subunit HslV.